Consider the following 346-residue polypeptide: Tryptophan--tRNA ligase (346 aa).

ATP is bound by residues 11-13 (RPT) and 19-20 (GH). The short motif at 12 to 20 (PTGKLHLGH) is the 'HIGH' region element. An L-tryptophan-binding site is contributed by Asp143. ATP-binding positions include 155–157 (GKD), Leu193, and 201–205 (KMSKS). The short motif at 201 to 205 (KMSKS) is the 'KMSKS' region element.

It belongs to the class-I aminoacyl-tRNA synthetase family. As to quaternary structure, homodimer.

The protein localises to the cytoplasm. The catalysed reaction is tRNA(Trp) + L-tryptophan + ATP = L-tryptophyl-tRNA(Trp) + AMP + diphosphate + H(+). In terms of biological role, catalyzes the attachment of tryptophan to tRNA(Trp). This is Tryptophan--tRNA ligase from Chlamydia muridarum (strain MoPn / Nigg).